We begin with the raw amino-acid sequence, 390 residues long: Endonuclease 8-like 1 (390 aa).

Catalysis depends on Pro-2, which acts as the Schiff-base intermediate with DNA. The active-site Proton donor is Glu-3. Lys-54 serves as the catalytic Proton donor; for beta-elimination activity. Residue Asn-176 participates in DNA binding. The disordered stretch occupies residues 278–390 (TIWFQGDPGP…SLEPEGTSAS (113 aa)). The span at 291–301 (KGRKSRKKKSK) shows a compositional bias: basic residues. Residues 335 to 347 (TATQRPEGTSLQQ) are compositionally biased toward polar residues. Arg-339 serves as a coordination point for DNA. The active-site Proton donor; for delta-elimination activity is Arg-339.

The protein belongs to the FPG family. As to expression, ubiquitous.

Its subcellular location is the cytoplasm. The protein localises to the cytoskeleton. The protein resides in the microtubule organizing center. It is found in the centrosome. It localises to the nucleus. Its subcellular location is the chromosome. It carries out the reaction 2'-deoxyribonucleotide-(2'-deoxyribose 5'-phosphate)-2'-deoxyribonucleotide-DNA = a 3'-end 2'-deoxyribonucleotide-(2,3-dehydro-2,3-deoxyribose 5'-phosphate)-DNA + a 5'-end 5'-phospho-2'-deoxyribonucleoside-DNA + H(+). Functionally, involved in base excision repair of DNA damaged by oxidation or by mutagenic agents. Acts as a DNA glycosylase that recognizes and removes damaged bases. Has a preference for oxidized pyrimidines, such as thymine glycol, formamidopyrimidine (Fapy) and 5-hydroxyuracil. Has marginal activity towards 8-oxoguanine. Has AP (apurinic/apyrimidinic) lyase activity and introduces nicks in the DNA strand. Cleaves the DNA backbone by beta-delta elimination to generate a single-strand break at the site of the removed base with both 3'- and 5'-phosphates. Has DNA glycosylase/lyase activity towards mismatched uracil and thymine, in particular in U:C and T:C mismatches. Specifically binds 5-hydroxymethylcytosine (5hmC), suggesting that it acts as a specific reader of 5hmC. This chain is Endonuclease 8-like 1 (NEIL1), found in Homo sapiens (Human).